The primary structure comprises 370 residues: Tomoregulin-1 (370 aa).

Residues 1-36 (MDGLHPASWMLLLGSLAFWSASSLLLFSLALPGARA) form the signal peptide. Residues 37–320 (SNQLLSECHN…VPSRQKLTHV (284 aa)) lie on the Extracellular side of the membrane. N-linked (GlcNAc...) asparagine glycosylation occurs at Asn53. Kazal-like domains lie at 88 to 135 (ICQF…PCFS) and 179 to 227 (VCNI…SCIE). Disulfide bonds link Cys89-Cys119, Cys93-Cys112, Cys101-Cys133, Cys180-Cys211, Cys184-Cys204, Cys193-Cys225, Cys265-Cys278, Cys273-Cys289, and Cys291-Cys300. The region spanning 261–301 (NYIPCSENYNGYCVHGKCELSYSSQKASCRCDSGYTGQYCD) is the EGF-like domain. The helical transmembrane segment at 321–341 (LIAAIIGAVQIAIIVAIVMCI) threads the bilayer. Topologically, residues 342-370 (TRKCPKNNRGRRQKQNLGHFSSDTSSRMV) are cytoplasmic. Positions 349-370 (NRGRRQKQNLGHFSSDTSSRMV) are disordered. The segment covering 356 to 370 (QNLGHFSSDTSSRMV) has biased composition (polar residues).

Belongs to the tomoregulin family. As to quaternary structure, interacts with cripto. Expressed at highest levels in brain, and at lower levels in neuroendocrine tissues. Present in neurons from the diencephalon (at protein level).

The protein localises to the cell membrane. Functionally, inhibits nodal/nr-1 and bmp signaling during neural patterning through interaction with cripto. This chain is Tomoregulin-1 (tmeff1), found in Xenopus laevis (African clawed frog).